The following is a 233-amino-acid chain: Ribosomal RNA small subunit methyltransferase G (233 aa).

S-adenosyl-L-methionine is bound by residues Gly91, Met96, 142 to 143, and Arg157; that span reads VE.

It belongs to the methyltransferase superfamily. RNA methyltransferase RsmG family.

The protein resides in the cytoplasm. The catalysed reaction is guanosine(527) in 16S rRNA + S-adenosyl-L-methionine = N(7)-methylguanosine(527) in 16S rRNA + S-adenosyl-L-homocysteine. In terms of biological role, specifically methylates the N7 position of guanine in position 527 of 16S rRNA. In Cupriavidus necator (strain ATCC 17699 / DSM 428 / KCTC 22496 / NCIMB 10442 / H16 / Stanier 337) (Ralstonia eutropha), this protein is Ribosomal RNA small subunit methyltransferase G.